Reading from the N-terminus, the 153-residue chain is UPF0225 protein ETA_15740 (153 aa).

This sequence belongs to the UPF0225 family.

The protein is UPF0225 protein ETA_15740 of Erwinia tasmaniensis (strain DSM 17950 / CFBP 7177 / CIP 109463 / NCPPB 4357 / Et1/99).